The sequence spans 155 residues: MARMKLNARMSTGGKAPRKQLAYKAVRKAAPPTIGVKLPNSYRPGDQTVCKPAPPTDGVKEPHRYRPGKMGLREIRKYKKNARFFISKLPFHRLVRKITQNLKAHLRFQSTAMPAPEEVSEAYLVKLFEDAIHAKRVTLVPKDIQLARCIGGVLA.

The disordered stretch occupies residues 34–59; sequence IGVKLPNSYRPGDQTVCKPAPPTDGV.

The protein belongs to the histone H3 family. In terms of assembly, the nucleosome is a histone octamer containing two molecules each of H2A, H2B, H3 and H4 assembled in one H3-H4 heterotetramer and two H2A-H2B heterodimers. The octamer wraps approximately 147 bp of DNA. In terms of tissue distribution, pollen specific.

It is found in the nucleus. The protein localises to the chromosome. In terms of biological role, core component of nucleosome. Nucleosomes wrap and compact DNA into chromatin, limiting DNA accessibility to the cellular machineries which require DNA as a template. Histones thereby play a central role in transcription regulation, DNA repair, DNA replication and chromosomal stability. DNA accessibility is regulated via a complex set of post-translational modifications of histones, also called histone code, and nucleosome remodeling. In Lilium longiflorum (Trumpet lily), this protein is Histone H3-like 3 (leH3).